A 106-amino-acid chain; its full sequence is Large ribosomal subunit protein uL24 (106 aa).

The protein belongs to the universal ribosomal protein uL24 family. As to quaternary structure, part of the 50S ribosomal subunit.

In terms of biological role, one of two assembly initiator proteins, it binds directly to the 5'-end of the 23S rRNA, where it nucleates assembly of the 50S subunit. Its function is as follows. One of the proteins that surrounds the polypeptide exit tunnel on the outside of the subunit. In Marinobacter nauticus (strain ATCC 700491 / DSM 11845 / VT8) (Marinobacter aquaeolei), this protein is Large ribosomal subunit protein uL24.